We begin with the raw amino-acid sequence, 496 residues long: Solute carrier family 2, facilitated glucose transporter member 11 (496 aa).

The Cytoplasmic segment spans residues 1–11; the sequence is MRALRRLIQGR. A helical transmembrane segment spans residues 12–32; that stretch reads ILLLTICAAGIGGTFQFGYNL. Residues 33–61 are Extracellular-facing; the sequence is SIINAPTLHIQEFTNETWQARTGEPLPDH. Asn-47 carries N-linked (GlcNAc...) asparagine glycosylation. The helical transmembrane segment at 62 to 82 threads the bilayer; it reads LVLLMWSLIVSLYPLGGLFGA. Topologically, residues 83–97 are cytoplasmic; it reads LLAGPLAITLGRKKS. Residues 98–118 traverse the membrane as a helical segment; it reads LLVNNIFVVSAAILFGFSRKA. The Extracellular segment spans residues 119-128; that stretch reads GSFEMIMLGR. A helical membrane pass occupies residues 129–149; sequence LLVGVNAGVSMNIQPMYLGES. Over 150–157 the chain is Cytoplasmic; sequence APKELRGA. Residues 158 to 178 form a helical membrane-spanning segment; it reads VAMSSAIFTALGIVMGQVVGL. The Extracellular portion of the chain corresponds to 179–187; that stretch reads RELLGGPQA. The helical transmembrane segment at 188 to 208 threads the bilayer; sequence WPLLLASCLVPGALQLASLPL. Over 209–273 the chain is Cytoplasmic; the sequence is LPESPRYLLI…LFQHRALRRQ (65 aa). Residues 274 to 294 traverse the membrane as a helical segment; it reads VTSLVVLGSAMELCGNDSVYA. Residues 295–311 are Extracellular-facing; it reads YASSVFRKAGVPEAKIQ. Residues 312–332 form a helical membrane-spanning segment; it reads YAIIGTGSCELLTAVVSCVVI. At 333 to 338 the chain is on the cytoplasmic side; that stretch reads ERVGRR. Residues 339-359 traverse the membrane as a helical segment; sequence VLLIGGYSLMTCWGSIFTVAL. At 360–364 the chain is on the extracellular side; sequence CLQSS. Residues 365–385 form a helical membrane-spanning segment; the sequence is FPWTLYLAMACIFAFILSFGI. At 386–408 the chain is on the cytoplasmic side; it reads GPAGVTGILATELFDQMARPAAC. A helical transmembrane segment spans residues 409–429; that stretch reads MVCGALMWIMLILVGLGFPFI. Over 430 to 435 the chain is Extracellular; that stretch reads MEALSH. A helical transmembrane segment spans residues 436 to 456; the sequence is FLYVPFLGVCVCGAIYTGLFL. Residues 457 to 496 are Cytoplasmic-facing; that stretch reads PETKGKTFQEISKELHRLNFPRRAQGPTWRSLEVIQSTEL.

Belongs to the major facilitator superfamily. Sugar transporter (TC 2.A.1.1) family. Glucose transporter subfamily. In terms of tissue distribution, expressed in heart and skeletal muscle.

The protein localises to the cell membrane. It catalyses the reaction D-glucose(out) = D-glucose(in). Facilitative glucose transporter. The polypeptide is Solute carrier family 2, facilitated glucose transporter member 11 (Homo sapiens (Human)).